Reading from the N-terminus, the 383-residue chain is Succinyl-diaminopimelate desuccinylase (383 aa).

His-74 is a binding site for Zn(2+). Asp-76 is an active-site residue. Zn(2+) is bound at residue Asp-107. Catalysis depends on Glu-141, which acts as the Proton acceptor. Glu-142, Glu-170, and His-356 together coordinate Zn(2+).

The protein belongs to the peptidase M20A family. DapE subfamily. In terms of assembly, homodimer. Requires Zn(2+) as cofactor. Co(2+) serves as cofactor.

It carries out the reaction N-succinyl-(2S,6S)-2,6-diaminopimelate + H2O = (2S,6S)-2,6-diaminopimelate + succinate. Its pathway is amino-acid biosynthesis; L-lysine biosynthesis via DAP pathway; LL-2,6-diaminopimelate from (S)-tetrahydrodipicolinate (succinylase route): step 3/3. In terms of biological role, catalyzes the hydrolysis of N-succinyl-L,L-diaminopimelic acid (SDAP), forming succinate and LL-2,6-diaminopimelate (DAP), an intermediate involved in the bacterial biosynthesis of lysine and meso-diaminopimelic acid, an essential component of bacterial cell walls. This is Succinyl-diaminopimelate desuccinylase from Ralstonia nicotianae (strain ATCC BAA-1114 / GMI1000) (Ralstonia solanacearum).